A 265-amino-acid chain; its full sequence is tRNA pseudouridine synthase A (265 aa).

The active-site Nucleophile is the Asp55. Residue Tyr113 participates in substrate binding.

The protein belongs to the tRNA pseudouridine synthase TruA family. In terms of assembly, homodimer.

It catalyses the reaction uridine(38/39/40) in tRNA = pseudouridine(38/39/40) in tRNA. Its function is as follows. Formation of pseudouridine at positions 38, 39 and 40 in the anticodon stem and loop of transfer RNAs. This Levilactobacillus brevis (strain ATCC 367 / BCRC 12310 / CIP 105137 / JCM 1170 / LMG 11437 / NCIMB 947 / NCTC 947) (Lactobacillus brevis) protein is tRNA pseudouridine synthase A.